The sequence spans 100 residues: Urease subunit gamma (100 aa).

Belongs to the urease gamma subunit family. As to quaternary structure, heterotrimer of UreA (gamma), UreB (beta) and UreC (alpha) subunits. Three heterotrimers associate to form the active enzyme.

The protein resides in the cytoplasm. It carries out the reaction urea + 2 H2O + H(+) = hydrogencarbonate + 2 NH4(+). Its pathway is nitrogen metabolism; urea degradation; CO(2) and NH(3) from urea (urease route): step 1/1. In Limosilactobacillus fermentum (Lactobacillus fermentum), this protein is Urease subunit gamma.